A 518-amino-acid polypeptide reads, in one-letter code: Suppressor of hairless homolog (518 aa).

The segment at 22-59 (ETDQQRSHVKERVNGTPNQNGGTSTSSKPRSVFENRPP) is disordered. Over residues 24 to 34 (DQQRSHVKERV) the composition is skewed to basic and acidic residues. Residues 36–50 (GTPNQNGGTSTSSKP) are compositionally biased toward polar residues. 3 consecutive DNA-binding regions follow at residues 89–96 (KSYGNEKR), 223–232 (RLRSQTVSTR), and 296–328 (RKVD…ERMY). The 91-residue stretch at 386–476 (PVVHSLQLNG…YPTNLTFTFT (91 aa)) folds into the IPT/TIG domain.

The protein belongs to the Su(H) family. As to quaternary structure, interacts with activated Notch proteins.

It is found in the nucleus. In terms of biological role, transcriptional regulator that plays a central role in Notch signaling, a signaling pathway involved in cell-cell communication that regulates a broad spectrum of cell-fate determinations. Acts as a transcriptional repressor when it is not associated with Notch proteins. When associated with some Notch protein, it acts as a transcriptional activator that activates transcription of Notch target genes. This Halocynthia roretzi (Sea squirt) protein is Suppressor of hairless homolog (RBP-JK).